A 155-amino-acid chain; its full sequence is Small ribosomal subunit protein uS7 (155 aa).

The protein belongs to the universal ribosomal protein uS7 family. In terms of assembly, part of the 30S ribosomal subunit. Contacts proteins S9 and S11.

Its function is as follows. One of the primary rRNA binding proteins, it binds directly to 16S rRNA where it nucleates assembly of the head domain of the 30S subunit. Is located at the subunit interface close to the decoding center, probably blocks exit of the E-site tRNA. The chain is Small ribosomal subunit protein uS7 from Amoebophilus asiaticus (strain 5a2).